A 73-amino-acid polypeptide reads, in one-letter code: MAKQDVIEMEGTVVESLPNAMFRVELDNSFNILAHISGKIRRNYIKILPGDRVKVELTPYDLTKGRITYRLRK.

In terms of domain architecture, S1-like spans 1–72 (MAKQDVIEME…TKGRITYRLR (72 aa)).

Belongs to the IF-1 family. In terms of assembly, component of the 30S ribosomal translation pre-initiation complex which assembles on the 30S ribosome in the order IF-2 and IF-3, IF-1 and N-formylmethionyl-tRNA(fMet); mRNA recruitment can occur at any time during PIC assembly.

It is found in the cytoplasm. In terms of biological role, one of the essential components for the initiation of protein synthesis. Stabilizes the binding of IF-2 and IF-3 on the 30S subunit to which N-formylmethionyl-tRNA(fMet) subsequently binds. Helps modulate mRNA selection, yielding the 30S pre-initiation complex (PIC). Upon addition of the 50S ribosomal subunit IF-1, IF-2 and IF-3 are released leaving the mature 70S translation initiation complex. This chain is Translation initiation factor IF-1, found in Gloeobacter violaceus (strain ATCC 29082 / PCC 7421).